Reading from the N-terminus, the 284-residue chain is Bifunctional protein FolD (284 aa).

Residues 165-167 (GRS), serine 190, and valine 231 contribute to the NADP(+) site.

It belongs to the tetrahydrofolate dehydrogenase/cyclohydrolase family. As to quaternary structure, homodimer.

The catalysed reaction is (6R)-5,10-methylene-5,6,7,8-tetrahydrofolate + NADP(+) = (6R)-5,10-methenyltetrahydrofolate + NADPH. It catalyses the reaction (6R)-5,10-methenyltetrahydrofolate + H2O = (6R)-10-formyltetrahydrofolate + H(+). It participates in one-carbon metabolism; tetrahydrofolate interconversion. Functionally, catalyzes the oxidation of 5,10-methylenetetrahydrofolate to 5,10-methenyltetrahydrofolate and then the hydrolysis of 5,10-methenyltetrahydrofolate to 10-formyltetrahydrofolate. The chain is Bifunctional protein FolD from Bacillus licheniformis (strain ATCC 14580 / DSM 13 / JCM 2505 / CCUG 7422 / NBRC 12200 / NCIMB 9375 / NCTC 10341 / NRRL NRS-1264 / Gibson 46).